Reading from the N-terminus, the 381-residue chain is Cyclic AMP-AMP-GMP synthase (381 aa).

ATP-binding residues include Q51, S53, R56, D69, D71, and R109. Active-site residues include D69 and D71. Mg(2+)-binding residues include D69 and D71. Residue D121 is part of the active site. Positions 121 and 196 each coordinate Mg(2+). ATP contacts are provided by D196, R197, R204, T205, Q210, K233, and Y250. Residues N258 and L260 each coordinate Mg(2+). Positions 304 and 307 each coordinate ATP. Positions 348–381 (GSKFPLPGPQGGDRNGGFTTPSKPAEPQKTGRFA) are disordered.

The protein belongs to the CD-NTase family. D02 subfamily. Monomer. Crystallizes as a Cap2 homodimer bound on each side by a CdnD monomer. It depends on Mg(2+) as a cofactor. In bacteria expressing cap4-dncV-cap2-cap3, this protein is conjugated to a number of other proteins by Cap2, probably via this protein's C-terminal Ala residue. More conjugated DncV is found in the absence of Cap3.

It carries out the reaction GTP + 2 ATP = 3',3',3'-cAAG + 3 diphosphate. With respect to regulation, primed for activation by Cap2 which conjugates it to cellular proteins; activation is target protein-specific (green fluorescent protein does not activate the enzyme), but which protein(s) activate it is unclear. Functionally, cyclic nucleotide synthase (second messenger synthase) of a CBASS antivirus system. CBASS (cyclic oligonucleotide-based antiphage signaling system) provides immunity against bacteriophages. The CD-NTase protein (CdnD, this protein) synthesizes cyclic nucleotides in response to infection; these serve as specific second messenger signals. The signals activate a diverse range of effectors, leading to bacterial cell death and thus abortive phage infection. A type II-C(AAG) CBASS system. Its function is as follows. Cyclic trinucleotide synthase that catalyzes the synthesis of 3',3',3'-cyclic AMP-AMP-GMP (cAAG) as the major product, a second messenger for cell signal transduction. Uses ATP as the first donor nucleotide, followed by GTP. In terms of biological role, protects E.coli against phage T2 infection. When the cdnD-cap2-cap3-cap4 operon is introduced in E.coli there is a more than 10(3) decrease in the efficiency of T2 plaque formation. The operon does not protect against phage T5 and only about 10-fold against T7. Expression of cdnD-cap4 alone protects E.coli against phage T2 infection. In Enterobacter hormaechei subsp. hoffmannii (strain UCI 50), this protein is Cyclic AMP-AMP-GMP synthase.